A 163-amino-acid polypeptide reads, in one-letter code: ATP synthase subunit delta, chloroplastic (163 aa).

This sequence belongs to the ATPase delta chain family. As to quaternary structure, F-type ATPases have 2 components, F(1) - the catalytic core - and F(0) - the membrane proton channel. F(1) has five subunits: alpha(3), beta(3), gamma(1), delta(1), epsilon(1). CF(0) has four main subunits: a(1), b(1), b'(1) and c(10-14). The alpha and beta chains form an alternating ring which encloses part of the gamma chain. F(1) is attached to F(0) by a central stalk formed by the gamma and epsilon chains, while a peripheral stalk is formed by the delta, b and b' chains.

It localises to the plastid. The protein localises to the chloroplast thylakoid membrane. In terms of biological role, f(1)F(0) ATP synthase produces ATP from ADP in the presence of a proton or sodium gradient. F-type ATPases consist of two structural domains, F(1) containing the extramembraneous catalytic core and F(0) containing the membrane proton channel, linked together by a central stalk and a peripheral stalk. During catalysis, ATP synthesis in the catalytic domain of F(1) is coupled via a rotary mechanism of the central stalk subunits to proton translocation. Functionally, this protein is part of the stalk that links CF(0) to CF(1). It either transmits conformational changes from CF(0) to CF(1) or is implicated in proton conduction. The chain is ATP synthase subunit delta, chloroplastic from Cyanidioschyzon merolae (strain NIES-3377 / 10D) (Unicellular red alga).